Reading from the N-terminus, the 934-residue chain is AP-2 complex subunit alpha (934 aa).

Residues R623–T670 form a disordered region. Over residues P636 to H645 the composition is skewed to polar residues. A compositionally biased stretch (low complexity) spans S646–S663.

It belongs to the adapter complexes large subunit family. In terms of assembly, adaptor protein complex 2 (AP-2) is a heterotetramer composed of two large adaptins (alpha-type and beta-type subunits), a medium adaptin (mu-type subunit AP50) and a small adaptin (sigma-type subunit AP17).

The protein resides in the cell membrane. It is found in the membrane. The protein localises to the coated pit. In terms of biological role, adaptins are components of the adapter complexes which link clathrin to receptors in coated vesicles. Clathrin-associated protein complexes are believed to interact with the cytoplasmic tails of membrane proteins, leading to their selection and concentration. Alpha adaptin is a subunit of the plasma membrane adapter. The sequence is that of AP-2 complex subunit alpha from Anopheles gambiae (African malaria mosquito).